The primary structure comprises 565 residues: Nephrocystin-1 (565 aa).

Acidic residues predominate over residues 1–32; that stretch reads GEEEDEEEEEEEESEEGGGEEEESEEEEEEKQ. Disordered stretches follow at residues 1–46 and 95–132; these read GEEE…KEYI and VEPY…KQRT. Residues 2 to 48 are a coiled coil; that stretch reads EEEDEEEEEEEESEEGGGEEEESEEEEEEKQENESHHQATSKEYIAV. Serine 14 is subject to Phosphoserine. An SH3 domain is found at 40 to 100; it reads ATSKEYIAVG…PRTYVEPYNK (61 aa). A compositionally biased stretch (acidic residues) spans 104 to 118; the sequence is QDTSEEEDSEEDVEV. At tyrosine 182 the chain carries Phosphotyrosine; by FAK2. Tyrosine 554 is modified (phosphotyrosine; by SRC).

This sequence belongs to the nephrocystin-1 family. Interacts with Crk-associated substrate BCAR1, NPHP4, PTK2B/PYK2 and tensin. Interacts with INVS and NPHP3. Interacts with AHI1 and TNK2. Interacts with NPHP4 in a complex containing NPHP1, NPHP4 and RPGRIP1L/NPHP8. Interacts with IQCB1; the interaction likely requires additional interactors. Interacts with KIF7. Interacts with ANKS3. Interacts with SPATA7. Interacts with FLNA. In terms of tissue distribution, expressed in renal cells (at protein level).

The protein resides in the cell junction. The protein localises to the adherens junction. It is found in the cell projection. Its subcellular location is the cilium. It localises to the cytoplasm. The protein resides in the cytoskeleton. The protein localises to the cilium axoneme. It is found in the tight junction. Together with BCAR1 it may play a role in the control of epithelial cell polarity. Involved in the organization of apical junctions in kidney cells together with NPHP4 and RPGRIP1L/NPHP8. Does not seem to be strictly required for ciliogenesis. Seems to help to recruit PTK2B/PYK2 to cell matrix adhesions, thereby initiating phosphorylation of PTK2B/PYK2 and PTK2B/PYK2-dependent signaling. May play a role in the regulation of intraflagellar transport (IFT) during cilia assembly. Required for normal retina development. In connecting photoreceptor cilia influences the movement of some IFT proteins such as IFT88 and WDR19. Involved in spermatogenesis. The polypeptide is Nephrocystin-1 (NPHP1) (Canis lupus familiaris (Dog)).